A 755-amino-acid polypeptide reads, in one-letter code: Catalase-peroxidase (755 aa).

Residues 93–241 constitute a cross-link (tryptophyl-tyrosyl-methioninium (Trp-Tyr) (with M-267)); sequence WHSAGTYRVF…LAAAHMGLIY (149 aa). The active-site Proton acceptor is His-94. Positions 241–267 form a cross-link, tryptophyl-tyrosyl-methioninium (Tyr-Met) (with W-93); it reads YVNPEGPDGNPDPVAAARDIRVTFGRM. Heme b is bound at residue His-282.

Belongs to the peroxidase family. Peroxidase/catalase subfamily. In terms of assembly, homodimer or homotetramer. It depends on heme b as a cofactor. Formation of the three residue Trp-Tyr-Met cross-link is important for the catalase, but not the peroxidase activity of the enzyme.

The protein resides in the cytoplasm. It carries out the reaction H2O2 + AH2 = A + 2 H2O. The enzyme catalyses 2 H2O2 = O2 + 2 H2O. Functionally, bifunctional enzyme with both catalase and broad-spectrum peroxidase activity. The sequence is that of Catalase-peroxidase from Podospora anserina (strain S / ATCC MYA-4624 / DSM 980 / FGSC 10383) (Pleurage anserina).